Consider the following 382-residue polypeptide: Acetylornithine deacetylase (382 aa).

Residue His79 coordinates Zn(2+). The active site involves Asp81. Asp111 contributes to the Zn(2+) binding site. Glu143 is an active-site residue. 3 residues coordinate Zn(2+): Glu144, Glu168, and His354.

This sequence belongs to the peptidase M20A family. ArgE subfamily. Homodimer. The cofactor is Zn(2+). It depends on Co(2+) as a cofactor. Glutathione is required as a cofactor.

Its subcellular location is the cytoplasm. The catalysed reaction is N(2)-acetyl-L-ornithine + H2O = L-ornithine + acetate. The protein operates within amino-acid biosynthesis; L-arginine biosynthesis; L-ornithine from N(2)-acetyl-L-ornithine (linear): step 1/1. Functionally, catalyzes the hydrolysis of the amide bond of N(2)-acetylated L-amino acids. Cleaves the acetyl group from N-acetyl-L-ornithine to form L-ornithine, an intermediate in L-arginine biosynthesis pathway, and a branchpoint in the synthesis of polyamines. This Pasteurella multocida (strain Pm70) protein is Acetylornithine deacetylase.